The chain runs to 641 residues: Phosphomethylpyrimidine synthase (641 aa).

Substrate contacts are provided by residues N221, M250, Y279, H315, 335-337, 376-379, and E415; these read SRG and DGLR. H419 provides a ligand contact to Zn(2+). A substrate-binding site is contributed by Y442. H483 contributes to the Zn(2+) binding site. Residues C563, C566, and C571 each contribute to the [4Fe-4S] cluster site.

It belongs to the ThiC family. As to quaternary structure, homodimer. [4Fe-4S] cluster is required as a cofactor.

It catalyses the reaction 5-amino-1-(5-phospho-beta-D-ribosyl)imidazole + S-adenosyl-L-methionine = 4-amino-2-methyl-5-(phosphooxymethyl)pyrimidine + CO + 5'-deoxyadenosine + formate + L-methionine + 3 H(+). Its pathway is cofactor biosynthesis; thiamine diphosphate biosynthesis. Its function is as follows. Catalyzes the synthesis of the hydroxymethylpyrimidine phosphate (HMP-P) moiety of thiamine from aminoimidazole ribotide (AIR) in a radical S-adenosyl-L-methionine (SAM)-dependent reaction. The protein is Phosphomethylpyrimidine synthase of Rhodopseudomonas palustris (strain BisA53).